A 114-amino-acid chain; its full sequence is Small ribosomal subunit protein bS6 (114 aa).

Belongs to the bacterial ribosomal protein bS6 family.

Its function is as follows. Binds together with bS18 to 16S ribosomal RNA. The sequence is that of Small ribosomal subunit protein bS6 from Bacteroides thetaiotaomicron (strain ATCC 29148 / DSM 2079 / JCM 5827 / CCUG 10774 / NCTC 10582 / VPI-5482 / E50).